The following is a 191-amino-acid chain: Threonylcarbamoyl-AMP synthase (191 aa).

The 182-residue stretch at 10 to 191 (PFRVRHAAAE…DGRSGAYLRR (182 aa)) folds into the YrdC-like domain.

It belongs to the SUA5 family. TsaC subfamily.

Its subcellular location is the cytoplasm. It carries out the reaction L-threonine + hydrogencarbonate + ATP = L-threonylcarbamoyladenylate + diphosphate + H2O. Required for the formation of a threonylcarbamoyl group on adenosine at position 37 (t(6)A37) in tRNAs that read codons beginning with adenine. Catalyzes the conversion of L-threonine, HCO(3)(-)/CO(2) and ATP to give threonylcarbamoyl-AMP (TC-AMP) as the acyladenylate intermediate, with the release of diphosphate. In Halorhodospira halophila (strain DSM 244 / SL1) (Ectothiorhodospira halophila (strain DSM 244 / SL1)), this protein is Threonylcarbamoyl-AMP synthase.